A 352-amino-acid chain; its full sequence is PDZ and LIM domain protein 2 (352 aa).

The PDZ domain occupies 1-84 (MALTVDVAGP…PLRLQLDRSQ (84 aa)). 2 disordered regions span residues 69–95 (IRQS…NGDS) and 108–141 (VRTH…PPPF). The span at 81 to 95 (DRSQAASPGQTNGDS) shows a compositional bias: polar residues. A compositionally biased stretch (low complexity) spans 117-135 (SLRSSYSSPTSLSPRAGSP). Serine 124 carries the phosphoserine modification. Position 126 is a phosphothreonine (threonine 126). Residues serine 127, serine 129, serine 134, serine 137, serine 143, serine 161, serine 197, serine 203, serine 213, and serine 266 each carry the phosphoserine modification. Disordered regions lie at residues 170-214 (LSYS…GGSL) and 253-275 (ERGG…PASR). Over residues 258-275 (PAFLPSSLSPQSSLPASR) the composition is skewed to low complexity. Residues 284 to 344 (HTCEKCSTSI…EKHARQRYSA (61 aa)) enclose the LIM zinc-binding domain.

In terms of assembly, interacts with alpha-actinins ACTN1 and ACTN4, FLNA and MYH9. Interacts (via LIM zinc-binding domain) with MKRN2.

Its subcellular location is the cytoplasm. The protein resides in the cytoskeleton. In terms of biological role, probable adapter protein located at the actin cytoskeleton that promotes cell attachment. Necessary for the migratory capacity of epithelial cells. Overexpression enhances cell adhesion to collagen and fibronectin and suppresses anchorage independent growth. May contribute to tumor cell migratory capacity. This chain is PDZ and LIM domain protein 2 (PDLIM2), found in Macaca fascicularis (Crab-eating macaque).